Here is a 544-residue protein sequence, read N- to C-terminus: Chitin-inducible gibberellin-responsive protein 2 (544 aa).

Residues Met1 to Pro123 are disordered. Composition is skewed to polar residues over residues Asn15–Pro30, Ser63–Ser74, and Pro86–Gln101. Residues Arg165–His544 enclose the GRAS domain. A leucine repeat I (LRI) region spans residues Gly172–Ser232. A VHIID region spans residues Met251–Gly316. The short motif at Ile282–Asp286 is the VHIID element. Residues Leu332–His364 form a leucine repeat II (LRII) region. The tract at residues Leu373 to Asn467 is PFYRE. Residues Ala470–His544 are SAW.

The protein belongs to the GRAS family.

The protein localises to the nucleus. Its function is as follows. May play a regulatory role in the early step of oligosaccharide elicitor response, downstream of the membrane-associated high-affinity chitin-binding protein. The protein is Chitin-inducible gibberellin-responsive protein 2 (CIGR2) of Oryza sativa subsp. japonica (Rice).